A 380-amino-acid polypeptide reads, in one-letter code: Cytochrome b (380 aa).

A run of 4 helical transmembrane segments spans residues 34–54 (FGSLLGICLATQILTGLLLAA), 78–99 (WLIRNLHANGASFFFICIYLHI), 114–134 (WNTGVILLLTLMATAFVGYVL), and 179–199 (FFTLHFLLPFMIMGLTLIHLT). 2 residues coordinate heme b: His84 and His98. 2 residues coordinate heme b: His183 and His197. His202 contributes to the a ubiquinone binding site. Transmembrane regions (helical) follow at residues 227–247 (LKDTLGFMFMLLPLMTLALFS), 289–309 (LGGVLALAASVLILFLAPLLH), 321–341 (LFQLLFWTLTANLLILTWVGS), and 348–368 (FIIIGQLASLTYFTILLILFP).

Belongs to the cytochrome b family. As to quaternary structure, the cytochrome bc1 complex contains 11 subunits: 3 respiratory subunits (MT-CYB, CYC1 and UQCRFS1), 2 core proteins (UQCRC1 and UQCRC2) and 6 low-molecular weight proteins (UQCRH/QCR6, UQCRB/QCR7, UQCRQ/QCR8, UQCR10/QCR9, UQCR11/QCR10 and a cleavage product of UQCRFS1). This cytochrome bc1 complex then forms a dimer. It depends on heme b as a cofactor.

It is found in the mitochondrion inner membrane. Its function is as follows. Component of the ubiquinol-cytochrome c reductase complex (complex III or cytochrome b-c1 complex) that is part of the mitochondrial respiratory chain. The b-c1 complex mediates electron transfer from ubiquinol to cytochrome c. Contributes to the generation of a proton gradient across the mitochondrial membrane that is then used for ATP synthesis. The sequence is that of Cytochrome b (MT-CYB) from Grus nigricollis (Black-necked crane).